A 74-amino-acid polypeptide reads, in one-letter code: Antimicrobial peptide 36.4 (74 aa).

A signal peptide spans 1–22; it reads MKVNVLLAVFLVVMVVTDHCHA. The residue at position 39 (lysine 39) is a Lysine amide. Positions 44–74 are excised as a propeptide; it reads LQMEARFQPQNKNYRKRELDLENLFTHMPDY.

Belongs to the non-disulfide-bridged peptide (NDBP) superfamily. Short antimicrobial peptide (group 4) family. As to expression, expressed by the venom gland.

It localises to the secreted. The protein localises to the target cell membrane. Its function is as follows. Cationic host defense peptide that have antibacterial activity by breaking membranes. Is more effective on Gram-positive than on Gram-negative bacteria. The chain is Antimicrobial peptide 36.4 from Lychas mucronatus (Chinese swimming scorpion).